The sequence spans 475 residues: UDP-N-acetylmuramate--L-alanine ligase (475 aa).

114-120 (GTHGKTT) provides a ligand contact to ATP.

This sequence belongs to the MurCDEF family.

It is found in the cytoplasm. It carries out the reaction UDP-N-acetyl-alpha-D-muramate + L-alanine + ATP = UDP-N-acetyl-alpha-D-muramoyl-L-alanine + ADP + phosphate + H(+). Its pathway is cell wall biogenesis; peptidoglycan biosynthesis. Cell wall formation. The protein is UDP-N-acetylmuramate--L-alanine ligase of Bartonella henselae (strain ATCC 49882 / DSM 28221 / CCUG 30454 / Houston 1) (Rochalimaea henselae).